The sequence spans 78 residues: Large ribosomal subunit protein bL28 (78 aa).

Belongs to the bacterial ribosomal protein bL28 family.

This Clavibacter michiganensis subsp. michiganensis (strain NCPPB 382) protein is Large ribosomal subunit protein bL28.